Reading from the N-terminus, the 369-residue chain is UDP-N-acetylglucosamine--N-acetylmuramyl-(pentapeptide) pyrophosphoryl-undecaprenol N-acetylglucosamine transferase (369 aa).

UDP-N-acetyl-alpha-D-glucosamine-binding positions include T10 to G12, N124, R166, S196, and Q300.

This sequence belongs to the glycosyltransferase 28 family. MurG subfamily.

The protein localises to the cell membrane. It carries out the reaction di-trans,octa-cis-undecaprenyl diphospho-N-acetyl-alpha-D-muramoyl-L-alanyl-D-glutamyl-meso-2,6-diaminopimeloyl-D-alanyl-D-alanine + UDP-N-acetyl-alpha-D-glucosamine = di-trans,octa-cis-undecaprenyl diphospho-[N-acetyl-alpha-D-glucosaminyl-(1-&gt;4)]-N-acetyl-alpha-D-muramoyl-L-alanyl-D-glutamyl-meso-2,6-diaminopimeloyl-D-alanyl-D-alanine + UDP + H(+). It participates in cell wall biogenesis; peptidoglycan biosynthesis. Its function is as follows. Cell wall formation. Catalyzes the transfer of a GlcNAc subunit on undecaprenyl-pyrophosphoryl-MurNAc-pentapeptide (lipid intermediate I) to form undecaprenyl-pyrophosphoryl-MurNAc-(pentapeptide)GlcNAc (lipid intermediate II). The polypeptide is UDP-N-acetylglucosamine--N-acetylmuramyl-(pentapeptide) pyrophosphoryl-undecaprenol N-acetylglucosamine transferase (Desulfitobacterium hafniense (strain DSM 10664 / DCB-2)).